The primary structure comprises 287 residues: 4-hydroxybenzoate octaprenyltransferase (287 aa).

The next 5 helical transmembrane spans lie at 20-38 (IGTLLLMWPCLMALWFAAG), 95-115 (IVFLVMALFAFCLVLLLNPLV), 211-231 (IIAAFQFAALACFIIAGLIAE), 235-255 (IYGGGILAFIGFALYQQKLIF), and 266-286 (FLNNNWAGMALFIALGLDYLV).

It belongs to the UbiA prenyltransferase family. Mg(2+) serves as cofactor.

It is found in the cell inner membrane. It carries out the reaction all-trans-octaprenyl diphosphate + 4-hydroxybenzoate = 4-hydroxy-3-(all-trans-octaprenyl)benzoate + diphosphate. It functions in the pathway cofactor biosynthesis; ubiquinone biosynthesis. In terms of biological role, catalyzes the prenylation of para-hydroxybenzoate (PHB) with an all-trans polyprenyl group. Mediates the second step in the final reaction sequence of ubiquinone-8 (UQ-8) biosynthesis, which is the condensation of the polyisoprenoid side chain with PHB, generating the first membrane-bound Q intermediate 3-octaprenyl-4-hydroxybenzoate. In Shewanella piezotolerans (strain WP3 / JCM 13877), this protein is 4-hydroxybenzoate octaprenyltransferase.